Consider the following 145-residue polypeptide: D-aminoacyl-tRNA deacylase (145 aa).

The short motif at 137–138 (GP) is the Gly-cisPro motif, important for rejection of L-amino acids element.

This sequence belongs to the DTD family. Homodimer.

It localises to the cytoplasm. It catalyses the reaction glycyl-tRNA(Ala) + H2O = tRNA(Ala) + glycine + H(+). It carries out the reaction a D-aminoacyl-tRNA + H2O = a tRNA + a D-alpha-amino acid + H(+). Its function is as follows. An aminoacyl-tRNA editing enzyme that deacylates mischarged D-aminoacyl-tRNAs. Also deacylates mischarged glycyl-tRNA(Ala), protecting cells against glycine mischarging by AlaRS. Acts via tRNA-based rather than protein-based catalysis; rejects L-amino acids rather than detecting D-amino acids in the active site. By recycling D-aminoacyl-tRNA to D-amino acids and free tRNA molecules, this enzyme counteracts the toxicity associated with the formation of D-aminoacyl-tRNA entities in vivo and helps enforce protein L-homochirality. The chain is D-aminoacyl-tRNA deacylase from Lactobacillus delbrueckii subsp. bulgaricus (strain ATCC BAA-365 / Lb-18).